A 747-amino-acid polypeptide reads, in one-letter code: MVPGSEGPARAGSVVADVVFVIEGTANLGPYFEGLRKHYLLPAIEYFNGGPPAETDFGGDYGGTQYSLVVFNTVDCAPESYVQCHAPTSSAYEFVTWLDGIKFMGGGGESCSLIAEGLSTALQLFDDFKKMREQIGQTHRVCLLICNSPPYLLPAVESTTYSGCTTENLVQQIGERGIHFSIVSPRKLPALRLLFEKAAPPALLEPLQPPTDVSQDPRHMVLVRGLVLPVGGGSAPGPLQSKQPVPLPPAAPSGATLSAAPQQPLPPVPPQYQVPGNLSAAQVAAQNAVEAAKNQKAGLGPRFSPITPLQQAAPGVGPPFSQAPAPQLPPGPPGAPKPPPASQPSLVSTVAPGSGLAPTAQPGAPSMAGTVAPGGVSGPSPAQLGAPALGGQQSVSNKLLAWSGVLEWQEKPKPASVDANTKLTRSLPCQVYVNHGENLKTEQWPQKLIMQLIPQQLLTTLGPLFRNSRMVQFHFTNKDLESLKGLYRIMGNGFAGCVHFPHTAPCEVRVLMLLYSSKKKIFMGLIPYDQSGFVNGIRQVITNHKQVQQQKLEQQQRGMGGQQAPPGLGPILEDQARPSQNLLQLRPPQPQPQGTVGASGATGQPQPQGTAQPPPGAPQGPPGAASGPPPPGPILRPQNPGANPQLRSLLLNPPPPQTGVPPPQASLHHLQPPGAPALLPPPHQGLGQPQLGPPLLHPPPAQSWPAQLPPRAPLPGQMLLSGGPRGPVPQPGLQPSVMEDDILMDLI.

Residues Met1–Leu226 are interaction with the Mediator complex. 2 disordered regions span residues Gly233 to Val274 and Leu299 to Gly390. 2 stretches are compositionally biased toward pro residues: residues Gln263–Tyr272 and Pro326–Ser342. The tract at residues Leu389–Asn543 is interaction with VP16. The interaction with CREBBP stretch occupies residues Val395 to Lys545. Residues Gln548–Ile747 are disordered. Interaction with RARA stretches follow at residues Ala564–Pro653 and Pro640–Gln707. Over residues Ala598–Ala611 the composition is skewed to low complexity. Positions Gln612 to Ile634 are enriched in pro residues. Residues Leu646–Leu650 carry the LXXLL motif motif. Pro residues-rich tracts occupy residues Asn652–Gln664, Pro673–His683, and Leu691–Pro713. At Arg725 the chain carries Asymmetric dimethylarginine. The span at Met738 to Ile747 shows a compositional bias: acidic residues.

This sequence belongs to the Mediator complex subunit 25 family. In terms of assembly, component of the Mediator complex, which is composed of MED1, MED4, MED6, MED7, MED8, MED9, MED10, MED11, MED12, MED13, MED13L, MED14, MED15, MED16, MED17, MED18, MED19, MED20, MED21, MED22, MED23, MED24, MED25, MED26, MED27, MED29, MED30, MED31, CCNC, CDK8 and CDC2L6/CDK11. The MED12, MED13, CCNC and CDK8 subunits form a distinct module termed the CDK8 module. Mediator containing the CDK8 module is less active than Mediator lacking this module in supporting transcriptional activation. Individual preparations of the Mediator complex lacking one or more distinct subunits have been variously termed ARC, CRSP, DRIP, PC2, SMCC and TRAP. Interacts with CREBBP. Interacts with ESR1, GR, RARA, RXRA and THRB in a ligand-dependent fashion. Binds the Herpes simplex virus activator VP16. As to expression, ubiquitously expressed. Highest levels in brain, heart, kidney, peripheral leukocytes, placenta, skeletal muscle and spleen.

The protein localises to the nucleus. Component of the Mediator complex, a coactivator involved in the regulated transcription of nearly all RNA polymerase II-dependent genes. Mediator functions as a bridge to convey information from gene-specific regulatory proteins to the basal RNA polymerase II transcription machinery. Mediator is recruited to promoters by direct interactions with regulatory proteins and serves as a scaffold for the assembly of a functional preinitiation complex with RNA polymerase II and the general transcription factors. Required for RARA/RXRA-mediated transcription. The chain is Mediator of RNA polymerase II transcription subunit 25 (MED25) from Homo sapiens (Human).